Consider the following 325-residue polypeptide: Beta-ketoacyl-[acyl-carrier-protein] synthase III (325 aa).

Residues cysteine 112 and histidine 250 contribute to the active site. The tract at residues glutamine 251–arginine 255 is ACP-binding. The active site involves asparagine 280.

It belongs to the thiolase-like superfamily. FabH family. In terms of assembly, homodimer.

It is found in the cytoplasm. It carries out the reaction malonyl-[ACP] + acetyl-CoA + H(+) = 3-oxobutanoyl-[ACP] + CO2 + CoA. The protein operates within lipid metabolism; fatty acid biosynthesis. Its function is as follows. Catalyzes the condensation reaction of fatty acid synthesis by the addition to an acyl acceptor of two carbons from malonyl-ACP. Catalyzes the first condensation reaction which initiates fatty acid synthesis and may therefore play a role in governing the total rate of fatty acid production. Possesses both acetoacetyl-ACP synthase and acetyl transacylase activities. Its substrate specificity determines the biosynthesis of branched-chain and/or straight-chain of fatty acids. This Clostridium acetobutylicum (strain ATCC 824 / DSM 792 / JCM 1419 / IAM 19013 / LMG 5710 / NBRC 13948 / NRRL B-527 / VKM B-1787 / 2291 / W) protein is Beta-ketoacyl-[acyl-carrier-protein] synthase III.